Here is a 269-residue protein sequence, read N- to C-terminus: Thymidylate synthase (269 aa).

Residues Arg21 and 125–126 (RR) each bind dUMP. The active-site Nucleophile is the Cys145. Residues 171-174 (RSGD), Asn182, and 212-214 (HVY) each bind dUMP. Asp174 is a (6R)-5,10-methylene-5,6,7,8-tetrahydrofolate binding site. Residue Ala268 participates in (6R)-5,10-methylene-5,6,7,8-tetrahydrofolate binding.

It belongs to the thymidylate synthase family. Bacterial-type ThyA subfamily. Homodimer.

The protein localises to the cytoplasm. It catalyses the reaction dUMP + (6R)-5,10-methylene-5,6,7,8-tetrahydrofolate = 7,8-dihydrofolate + dTMP. The protein operates within pyrimidine metabolism; dTTP biosynthesis. Catalyzes the reductive methylation of 2'-deoxyuridine-5'-monophosphate (dUMP) to 2'-deoxythymidine-5'-monophosphate (dTMP) while utilizing 5,10-methylenetetrahydrofolate (mTHF) as the methyl donor and reductant in the reaction, yielding dihydrofolate (DHF) as a by-product. This enzymatic reaction provides an intracellular de novo source of dTMP, an essential precursor for DNA biosynthesis. The protein is Thymidylate synthase of Cutibacterium acnes (strain DSM 16379 / KPA171202) (Propionibacterium acnes).